Consider the following 198-residue polypeptide: Large ribosomal subunit protein uL13B (198 aa).

At serine 2 the chain carries N-acetylserine; partial. Phosphoserine is present on serine 43. Lysine 176 is covalently cross-linked (Glycyl lysine isopeptide (Lys-Gly) (interchain with G-Cter in ubiquitin)). A phosphoserine mark is found at serine 181, serine 185, and serine 187.

Belongs to the universal ribosomal protein uL13 family. Component of the large ribosomal subunit (LSU). Mature yeast ribosomes consist of a small (40S) and a large (60S) subunit. The 40S small subunit contains 1 molecule of ribosomal RNA (18S rRNA) and 33 different proteins (encoded by 57 genes). The large 60S subunit contains 3 rRNA molecules (25S, 5.8S and 5S rRNA) and 46 different proteins (encoded by 81 genes). In terms of processing, N-terminally acetylated by acetyltransferase NatA.

The protein resides in the cytoplasm. Component of the ribosome, a large ribonucleoprotein complex responsible for the synthesis of proteins in the cell. The small ribosomal subunit (SSU) binds messenger RNAs (mRNAs) and translates the encoded message by selecting cognate aminoacyl-transfer RNA (tRNA) molecules. The large subunit (LSU) contains the ribosomal catalytic site termed the peptidyl transferase center (PTC), which catalyzes the formation of peptide bonds, thereby polymerizing the amino acids delivered by tRNAs into a polypeptide chain. The nascent polypeptides leave the ribosome through a tunnel in the LSU and interact with protein factors that function in enzymatic processing, targeting, and the membrane insertion of nascent chains at the exit of the ribosomal tunnel. The chain is Large ribosomal subunit protein uL13B from Saccharomyces cerevisiae (strain ATCC 204508 / S288c) (Baker's yeast).